An 820-amino-acid polypeptide reads, in one-letter code: MMNQDIKTIIQYPVGDVEFDIPFDYLSRKFVRVYLVSPLNRRQLNNITEYRYVSRTRIKLLVETAGFNLIEIRRFTSASERVVDFSDGSVLRATDLNVSQLQSAHIAEEARDAAMLTISPADDGSLDASGKVIKNVGTPVQSSDAATKGYVDTAVSPLATTIEANFMRTLRTSGRSIRELPGASEVAGMLLGFNGEGDPVPVVAGEGTASDVMLKLAGTTGLSYIGGVGYVTPEMMTVDGKTLVRGLGQDHVRFIQKAIDEGHRRNVPVILSGGYEVYETLHDAPLPRDDGTAYPEWVANGGDSNIRPEEQLYQKAHLRLYNNSVILGAGSQIATIRSTWARSTSAVGLTSPIMWYIEGPLGNRGTVSYVLKGIKTIGAYIGRYVVGISYRSVEDDLEFAGCGIAGVKQGEEQTIHRKIVITAYAGDVTGGWWLQRNNAYGAKYMPPYTDTDVWLLGWCDSSTYEYLSYTGYDYDGRDALVHDWISEWFDTYIFKTANSRKVSEGGRLTYQSANPYPLPTLKGITGRARYITSRYSRQNALNVINTLKTLITIRAPGYMDNSTQSCRILNAMIESVGLIRRTSGANAGNYFGIDVVDKWGADTGVWGLEGTGILEKQLVVFLRPGVPCTNAVVATGAGQIFESWTTTNAQRRLLALRDWNPATQVQTYRYDFRTDYALMRPTRYYTDGPLWNYSKGTSTPTVAVNGSTIAVQKAVTNWYRLGDIMRCNIYVEINSITLQGNSELTVTTPSFNGSWEVAGQGIGKVYLSTLTGGVTLTPVIQQGGNVVRLRKGSSPEVYAFEAGTYNNVVLIIGIDYVPLS.

The protein in the N-terminal section; belongs to the Teseptimavirus fiber family. In terms of assembly, homotrimer.

Its subcellular location is the virion. Functionally, functions as a receptor binding protein (RBP) and probably mediates the attachment to the host capsular exopolysaccharides. Displays a depolymerase activity that specifically degrades the KN1-type polysaccharides of Klebsiella pneumoniae capsule, which allows the phage to reach the host cell membrane and bind the entry receptor. This Klebsiella pneumoniae (Bacteriophage KN1-1) protein is Depolymerase, capsule KN1-specific.